The primary structure comprises 25 residues: Fibrinolytic enzyme large subunit (25 aa).

The Peptidase S1 domain occupies 1–25; sequence VIGGTNASPGEIPWQLSQQRQSGSW. Residues 1–25 are disordered; it reads VIGGTNASPGEIPWQLSQQRQSGSW. A compositionally biased stretch (polar residues) spans 15–25; that stretch reads QLSQQRQSGSW.

The protein belongs to the peptidase S1 family. Heterodimer of a large and a small subunit held together by hydrophobic interactions.

Its function is as follows. Cleaves the carboxyl side of basic amino acids, small neutral amino acids, and Met residue. It is also a plasminogen activator. This chain is Fibrinolytic enzyme large subunit, found in Eisenia fetida (Red wiggler worm).